We begin with the raw amino-acid sequence, 294 residues long: HTH-type transcriptional regulator XapR (294 aa).

The region spanning 7–64 (TDLKLLRYFLAVAEELHFGRAAARLNMSQPPLSIHIKELENQLGTQLFIRHSRSVVLT) is the HTH lysR-type domain. Residues 24–43 (FGRAAARLNMSQPPLSIHIK) constitute a DNA-binding region (H-T-H motif).

It belongs to the LysR transcriptional regulatory family.

In terms of biological role, positive regulator required for the expression of xapA and xapB. Binds to the inducer xanthosine. In Escherichia coli (strain K12), this protein is HTH-type transcriptional regulator XapR (xapR).